A 387-amino-acid chain; its full sequence is Acetylornithine aminotransferase (387 aa).

Pyridoxal 5'-phosphate is bound by residues 97–98 (GT) and F130. R133 contributes to the N(2)-acetyl-L-ornithine binding site. A pyridoxal 5'-phosphate-binding site is contributed by 215-218 (DEVQ). An N6-(pyridoxal phosphate)lysine modification is found at K244. T273 serves as a coordination point for pyridoxal 5'-phosphate.

This sequence belongs to the class-III pyridoxal-phosphate-dependent aminotransferase family. ArgD subfamily. In terms of assembly, homodimer. Requires pyridoxal 5'-phosphate as cofactor.

Its subcellular location is the cytoplasm. It carries out the reaction N(2)-acetyl-L-ornithine + 2-oxoglutarate = N-acetyl-L-glutamate 5-semialdehyde + L-glutamate. Its pathway is amino-acid biosynthesis; L-arginine biosynthesis; N(2)-acetyl-L-ornithine from L-glutamate: step 4/4. This chain is Acetylornithine aminotransferase, found in Clostridium acetobutylicum (strain ATCC 824 / DSM 792 / JCM 1419 / IAM 19013 / LMG 5710 / NBRC 13948 / NRRL B-527 / VKM B-1787 / 2291 / W).